A 176-amino-acid polypeptide reads, in one-letter code: ATP-dependent protease subunit HslV (176 aa).

Thr-2 is an active-site residue. The Na(+) site is built by Ser-157, Cys-160, and Thr-163.

This sequence belongs to the peptidase T1B family. HslV subfamily. As to quaternary structure, a double ring-shaped homohexamer of HslV is capped on each side by a ring-shaped HslU homohexamer. The assembly of the HslU/HslV complex is dependent on binding of ATP.

It is found in the cytoplasm. It carries out the reaction ATP-dependent cleavage of peptide bonds with broad specificity.. Its activity is regulated as follows. Allosterically activated by HslU binding. Protease subunit of a proteasome-like degradation complex believed to be a general protein degrading machinery. This is ATP-dependent protease subunit HslV from Buchnera aphidicola subsp. Baizongia pistaciae (strain Bp).